The following is a 589-amino-acid chain: Phosphoenolpyruvate carboxykinase [GTP] (589 aa).

Residues Arg75 and 207-209 (YGG) each bind substrate. Mn(2+)-binding residues include Lys216 and His236. Residue Ser258 coordinates substrate. 259–264 (ASGKTN) serves as a coordination point for GTP. Residue Ser260 is part of the active site. Residue Asp287 participates in Mn(2+) binding. Substrate is bound at residue 374 to 376 (NSR). Residues Arg376, Arg407, and 500 to 503 (FAEN) contribute to the GTP site.

This sequence belongs to the phosphoenolpyruvate carboxykinase [GTP] family. Mn(2+) serves as cofactor.

The protein resides in the cytoplasm. The catalysed reaction is oxaloacetate + GTP = phosphoenolpyruvate + GDP + CO2. It participates in carbohydrate biosynthesis; gluconeogenesis. Its function is as follows. Catalyzes the conversion of oxaloacetate (OAA) to phosphoenolpyruvate (PEP), the rate-limiting step in the metabolic pathway that produces glucose from lactate and other precursors derived from the citric acid cycle. This is Phosphoenolpyruvate carboxykinase [GTP] from Thermoplasma volcanium (strain ATCC 51530 / DSM 4299 / JCM 9571 / NBRC 15438 / GSS1).